A 338-amino-acid chain; its full sequence is POU domain, class 4, transcription factor 3 (338 aa).

The short motif at 56-65 (RAEALAAVDI) is the POU-IV box element. The interval 91–112 (TSPTVPISHPAALTSHPHHPVH) is disordered. A POU-specific domain is found at 179 to 256 (DVESDPRELE…VLQAWLEEAE (78 aa)). Residues 274 to 333 (RKRKRTSIAAPEKRSLEAYFAIQPRPSSEKIAAIAEKLDLKKNVVRVWFCNQRQKQKRMK) constitute a DNA-binding region (homeobox).

This sequence belongs to the POU transcription factor family. As to quaternary structure, interacts with ISL1. As to expression, expressed in the chochlea of the inner ear.

It is found in the nucleus. It localises to the cytoplasm. Its function is as follows. Acts as a transcriptional activator. Acts by binding to sequences related to the consensus octamer motif 5'-ATGCAAAT-3' in the regulatory regions of its target genes. Involved in the auditory system development, required for terminal differentiation of hair cells in the inner ear. The polypeptide is POU domain, class 4, transcription factor 3 (Rattus norvegicus (Rat)).